Consider the following 60-residue polypeptide: uncharacterized protein (60 aa).

The first 21 residues, 1–21 (MNKLLKLFFITIIIYNNIAFA), serve as a signal peptide directing secretion.

This is an uncharacterized protein from Rickettsia prowazekii (strain Madrid E).